The chain runs to 1755 residues: Gag-Pro-Pol polyprotein (1755 aa).

Gly-2 carries the N-myristoyl glycine; by host lipid modification. Basic and acidic residues-rich tracts occupy residues 151–169 (YDEP…EKDH) and 178–191 (QRKE…KEKD). The disordered stretch occupies residues 151 to 191 (YDEPYEEKEKADKNEEKDHVRKIKKVVQRKENSEGKRKEKD). The PTAP/PSAP motif signature appears at 305 to 308 (PSAP). CCHC-type zinc fingers lie at residues 525-542 (PVCF…DCKD) and 552-569 (GLCP…ECKS). The interval 572–631 (DKDGNPLPPLETNAENSKNLVKGQSPSPAQKGDGVKGSGLNPEAPPFTIHDLPRGTPGSA) is disordered. A compositionally biased stretch (polar residues) spans 584-599 (NAENSKNLVKGQSPSP). A Peptidase A2 domain is found at 766–841 (FLGLLDTGAD…LPFTLWGRDI (76 aa)). Asp-771 functions as the Protease; shared with dimeric partner in the catalytic mechanism. In terms of domain architecture, Reverse transcriptase spans 905-1093 (LQLGHLEESN…DNLKYLGTHI (189 aa)). Positions 970, 1045, 1046, 1316, 1346, 1366, and 1429 each coordinate Mg(2+). The RNase H type-1 domain occupies 1307-1437 (LEKGIVIFTD…ADSLTRILTA (131 aa)). Residues 1436-1477 (TALESAQESHALHHQNAAALRFQFHITREQAREIVKLCPNCP) form an Integrase-type zinc finger. Zn(2+)-binding residues include His-1445, His-1449, Cys-1473, and Cys-1476. The Integrase catalytic domain maps to 1490–1647 (RGLKPRVLWQ…TAAERHWGPI (158 aa)). The Mg(2+) site is built by Asp-1501, Asp-1558, and Glu-1594. Positions 1653-1702 (PMVMWKDLLTGSWKGPDVLITAGRGYACVFPQDAETPIWVPDRFIRPFTE) form a DNA-binding region, integrase-type. The tract at residues 1699–1755 (PFTERKEATPTPGTAEKTPPRDEKDQQESPKNESSPHQREDGLATSAGVDLRSGGGP) is disordered. The segment covering 1716–1740 (TPPRDEKDQQESPKNESSPHQREDG) has biased composition (basic and acidic residues).

The protein belongs to the retroviral Pol polyprotein family. In terms of assembly, homodimer; when myristoylated. Homodimer. As to quaternary structure, homooctamer. In terms of assembly, homotrimer. The cofactor is Mg(2+). Specific enzymatic cleavages in vivo yield mature proteins. In terms of processing, released by autocatalytic processing. Post-translationally, myristoylated. Myristoylation of the matrix (MA) domain mediates the transport and binding of Gag polyproteins to the host plasma membrane and is required for the assembly of viral particles.

It localises to the virion. It catalyses the reaction DNA(n) + a 2'-deoxyribonucleoside 5'-triphosphate = DNA(n+1) + diphosphate. The enzyme catalyses Endonucleolytic cleavage to 5'-phosphomonoester.. It carries out the reaction dUTP + H2O = dUMP + diphosphate + H(+). Inhibited by pepstatin A. Matrix protein. In terms of biological role, nucleocapsid protein p14: Binds strongly to viral nucleic acids and promote their aggregation. Also destabilizes the nucleic acids duplexes via highly structured zinc-binding motifs. Functionally, capsid protein. Its function is as follows. NC-dUTPase has dUTPase activity, thereby preventing incorporation of uracil into DNA. The aspartyl protease mediates proteolytic cleavages of Gag and Gag-Pol polyproteins during or shortly after the release of the virion from the plasma membrane. Cleavages take place as an ordered, step-wise cascade to yield mature proteins. This process is called maturation. Displays maximal activity during the budding process just prior to particle release from the cell. In terms of biological role, RT is a multifunctional enzyme that converts the viral dimeric RNA genome into dsDNA in the cytoplasm, shortly after virus entry into the cell. This enzyme displays a DNA polymerase activity that can copy either DNA or RNA templates, and a ribonuclease H (RNase H) activity that cleaves the RNA strand of RNA-DNA heteroduplexes in a partially processive 3' to 5' endonucleasic mode. Conversion of viral genomic RNA into dsDNA requires many steps. A tRNA binds to the primer-binding site (PBS) situated at the 5' end of the viral RNA. RT uses the 3' end of the tRNA primer to perfom a short round of RNA-dependent minus-strand DNA synthesis. The reading proceeds through the U5 region and ends after the repeated (R) region which is present at both ends of viral RNA. The portion of the RNA-DNA heteroduplex is digested by the RNase H, resulting in a ssDNA product attached to the tRNA primer. This ssDNA/tRNA hybridizes with the identical R region situated at the 3' end of viral RNA. This template exchange, known as minus-strand DNA strong stop transfer, can be either intra- or intermolecular. RT uses the 3' end of this newly synthesized short ssDNA to perfom the RNA-dependent minus-strand DNA synthesis of the whole template. RNase H digests the RNA template except for a polypurine tract (PPT) situated at the 5' end of the genome. It is not clear if both polymerase and RNase H activities are simultaneous. RNase H probably can proceed both in a polymerase-dependent (RNA cut into small fragments by the same RT performing DNA synthesis) and a polymerase-independent mode (cleavage of remaining RNA fragments by free RTs). Secondly, RT performs DNA-directed plus-strand DNA synthesis using the PPT that has not been removed by RNase H as primers. PPT and tRNA primers are then removed by RNase H. The 3' and 5' ssDNA PBS regions hybridize to form a circular dsDNA intermediate. Strand displacement synthesis by RT to the PBS and PPT ends produces a blunt ended, linear dsDNA copy of the viral genome that includes long terminal repeats (LTRs) at both ends. Functionally, catalyzes viral DNA integration into the host chromosome, by performing a series of DNA cutting and joining reactions. In Mus musculus (Mouse), this protein is Gag-Pro-Pol polyprotein (gag-pro-pol).